The primary structure comprises 64 residues: Large ribosomal subunit protein uL29 (64 aa).

It belongs to the universal ribosomal protein uL29 family.

The chain is Large ribosomal subunit protein uL29 from Porphyromonas gingivalis (strain ATCC 33277 / DSM 20709 / CIP 103683 / JCM 12257 / NCTC 11834 / 2561).